Reading from the N-terminus, the 197-residue chain is Imidazoleglycerol-phosphate dehydratase (197 aa).

The protein belongs to the imidazoleglycerol-phosphate dehydratase family.

It is found in the cytoplasm. It carries out the reaction D-erythro-1-(imidazol-4-yl)glycerol 3-phosphate = 3-(imidazol-4-yl)-2-oxopropyl phosphate + H2O. It functions in the pathway amino-acid biosynthesis; L-histidine biosynthesis; L-histidine from 5-phospho-alpha-D-ribose 1-diphosphate: step 6/9. This Azotobacter vinelandii (strain DJ / ATCC BAA-1303) protein is Imidazoleglycerol-phosphate dehydratase.